Consider the following 147-residue polypeptide: Nucleoside diphosphate kinase (147 aa).

K9, F57, R85, T91, R102, and N112 together coordinate ATP. H115 serves as the catalytic Pros-phosphohistidine intermediate.

The protein belongs to the NDK family. In terms of assembly, homotetramer. Mg(2+) serves as cofactor.

The protein resides in the cytoplasm. It catalyses the reaction a 2'-deoxyribonucleoside 5'-diphosphate + ATP = a 2'-deoxyribonucleoside 5'-triphosphate + ADP. The catalysed reaction is a ribonucleoside 5'-diphosphate + ATP = a ribonucleoside 5'-triphosphate + ADP. Functionally, major role in the synthesis of nucleoside triphosphates other than ATP. The ATP gamma phosphate is transferred to the NDP beta phosphate via a ping-pong mechanism, using a phosphorylated active-site intermediate. This chain is Nucleoside diphosphate kinase, found in Listeria monocytogenes serotype 4b (strain CLIP80459).